Here is a 512-residue protein sequence, read N- to C-terminus: Glutamyl-tRNA(Gln) amidotransferase subunit A (512 aa).

Active-site charge relay system residues include Lys-82 and Ser-157. Ser-181 functions as the Acyl-ester intermediate in the catalytic mechanism.

This sequence belongs to the amidase family. GatA subfamily. In terms of assembly, heterotrimer of A, B and C subunits.

The catalysed reaction is L-glutamyl-tRNA(Gln) + L-glutamine + ATP + H2O = L-glutaminyl-tRNA(Gln) + L-glutamate + ADP + phosphate + H(+). Allows the formation of correctly charged Gln-tRNA(Gln) through the transamidation of misacylated Glu-tRNA(Gln) in organisms which lack glutaminyl-tRNA synthetase. The reaction takes place in the presence of glutamine and ATP through an activated gamma-phospho-Glu-tRNA(Gln). In Bordetella bronchiseptica (strain ATCC BAA-588 / NCTC 13252 / RB50) (Alcaligenes bronchisepticus), this protein is Glutamyl-tRNA(Gln) amidotransferase subunit A.